We begin with the raw amino-acid sequence, 105 residues long: DNA-directed RNA polymerase subunit omega (105 aa).

This sequence belongs to the RNA polymerase subunit omega family. In terms of assembly, the RNAP catalytic core consists of 2 alpha, 1 beta, 1 beta' and 1 omega subunit. When a sigma factor is associated with the core the holoenzyme is formed, which can initiate transcription.

It catalyses the reaction RNA(n) + a ribonucleoside 5'-triphosphate = RNA(n+1) + diphosphate. In terms of biological role, promotes RNA polymerase assembly. Latches the N- and C-terminal regions of the beta' subunit thereby facilitating its interaction with the beta and alpha subunits. This Streptococcus pyogenes serotype M12 (strain MGAS2096) protein is DNA-directed RNA polymerase subunit omega.